The following is a 493-amino-acid chain: Glycerol kinase (493 aa).

Thr13 is a binding site for ADP. Positions 13, 14, and 15 each coordinate ATP. Residue Thr13 participates in sn-glycerol 3-phosphate binding. Arg17 serves as a coordination point for ADP. Positions 83, 84, 135, and 244 each coordinate sn-glycerol 3-phosphate. Glycerol is bound by residues Arg83, Glu84, Tyr135, Asp244, and Gln245. ADP is bound by residues Thr266 and Gly309. ATP-binding residues include Thr266, Gly309, Gln313, and Gly410. ADP is bound by residues Gly410 and Asn414.

It belongs to the FGGY kinase family.

The enzyme catalyses glycerol + ATP = sn-glycerol 3-phosphate + ADP + H(+). The protein operates within polyol metabolism; glycerol degradation via glycerol kinase pathway; sn-glycerol 3-phosphate from glycerol: step 1/1. With respect to regulation, inhibited by fructose 1,6-bisphosphate (FBP). Functionally, key enzyme in the regulation of glycerol uptake and metabolism. Catalyzes the phosphorylation of glycerol to yield sn-glycerol 3-phosphate. This chain is Glycerol kinase, found in Shewanella halifaxensis (strain HAW-EB4).